The following is a 283-amino-acid chain: Thymidylate synthase (283 aa).

Residues Arg-31 and 145-146 each bind dUMP; that span reads RR. The active-site Nucleophile is the Cys-165. DUMP contacts are provided by residues 185–188, Asn-196, and 226–228; these read RSAD and HIY. Residue Asp-188 participates in (6R)-5,10-methylene-5,6,7,8-tetrahydrofolate binding. Ser-282 contributes to the (6R)-5,10-methylene-5,6,7,8-tetrahydrofolate binding site.

The protein belongs to the thymidylate synthase family. Bacterial-type ThyA subfamily. As to quaternary structure, homodimer.

The protein resides in the cytoplasm. The catalysed reaction is dUMP + (6R)-5,10-methylene-5,6,7,8-tetrahydrofolate = 7,8-dihydrofolate + dTMP. Its pathway is pyrimidine metabolism; dTTP biosynthesis. Its function is as follows. Catalyzes the reductive methylation of 2'-deoxyuridine-5'-monophosphate (dUMP) to 2'-deoxythymidine-5'-monophosphate (dTMP) while utilizing 5,10-methylenetetrahydrofolate (mTHF) as the methyl donor and reductant in the reaction, yielding dihydrofolate (DHF) as a by-product. This enzymatic reaction provides an intracellular de novo source of dTMP, an essential precursor for DNA biosynthesis. The chain is Thymidylate synthase from Symbiobacterium thermophilum (strain DSM 24528 / JCM 14929 / IAM 14863 / T).